We begin with the raw amino-acid sequence, 69 residues long: UPF0150 protein AF_1072 (69 aa).

This sequence belongs to the UPF0150 family.

This Archaeoglobus fulgidus (strain ATCC 49558 / DSM 4304 / JCM 9628 / NBRC 100126 / VC-16) protein is UPF0150 protein AF_1072.